The following is a 277-amino-acid chain: Carbonyl reductase [NADPH] 1 (277 aa).

S2 bears the N-acetylserine mark. Position 2 is a phosphoserine (S2). Residues 10–34, 63–64, and N90 contribute to the NADP(+) site; these read VTGA…GDVV and DI. Glutathione contacts are provided by residues 95 to 97 and Q106; that span reads FKV. S140 contributes to the substrate binding site. 193 to 194 is a glutathione binding site; sequence AY. The active-site Proton acceptor is the Y194. Residues 194–198 and 231–233 each bind NADP(+); these read YGVTK and VRT. Residue K239 is modified to N6-1-carboxyethyl lysine. A disordered region spans residues 258–277; sequence PPGAEGPHGQFVQDKKVEPW.

Belongs to the short-chain dehydrogenases/reductases (SDR) family. In terms of assembly, monomer.

The protein resides in the cytoplasm. It catalyses the reaction a secondary alcohol + NADP(+) = a ketone + NADPH + H(+). The enzyme catalyses prostaglandin F2alpha + NADP(+) = prostaglandin E2 + NADPH + H(+). It carries out the reaction prostaglandin E1 + NADP(+) = 15-oxoprostaglandin E1 + NADPH + H(+). The catalysed reaction is menadione + NADPH + H(+) = menadiol + NADP(+). It catalyses the reaction prostaglandin D2 + NADP(+) = 15-oxoprostaglandin D2 + NADPH + H(+). The enzyme catalyses prostaglandin E2 + NADP(+) = 15-oxoprostaglandin E2 + NADPH + H(+). It carries out the reaction prostaglandin F2alpha + NADP(+) = 15-oxoprostaglandin F2alpha + NADPH + H(+). The catalysed reaction is daunorubicin + NADPH + H(+) = 13-dihydrodaunorubicin + NADP(+). It catalyses the reaction S-nitrosoglutathione + NADPH + H(+) = S-(hydroxysulfenamide)glutathione + NADP(+). The enzyme catalyses a primary alcohol + NADP(+) = an aldehyde + NADPH + H(+). It carries out the reaction cortisol + NADPH + H(+) = 20beta-dihydrocortisol + NADP(+). The catalysed reaction is corticosterone + NADPH + H(+) = 20beta-dihydrocorticosterone + NADP(+). NADPH-dependent reductase with broad substrate specificity. Catalyzes the reduction of a wide variety of carbonyl compounds including quinones, prostaglandins, menadione, plus various xenobiotics. Catalyzes the reduction of the antitumor anthracyclines doxorubicin and daunorubicin to the cardiotoxic compounds doxorubicinol and daunorubicinol. Can convert prostaglandin E to prostaglandin F2-alpha. Can bind glutathione, which explains its higher affinity for glutathione-conjugated substrates. Catalyzes the reduction of S-nitrosoglutathione. In addition, participates in the glucocorticoid metabolism by catalyzing the NADPH-dependent cortisol/corticosterone into 20beta-dihydrocortisol (20b-DHF) or 20beta-corticosterone (20b-DHB), which are weak agonists of NR3C1 and NR3C2 in adipose tissue. The protein is Carbonyl reductase [NADPH] 1 of Rattus norvegicus (Rat).